The primary structure comprises 156 residues: Small ribosomal subunit protein uS7 (156 aa).

Belongs to the universal ribosomal protein uS7 family. Part of the 30S ribosomal subunit. Contacts proteins S9 and S11.

Functionally, one of the primary rRNA binding proteins, it binds directly to 16S rRNA where it nucleates assembly of the head domain of the 30S subunit. Is located at the subunit interface close to the decoding center, probably blocks exit of the E-site tRNA. The chain is Small ribosomal subunit protein uS7 from Roseobacter denitrificans (strain ATCC 33942 / OCh 114) (Erythrobacter sp. (strain OCh 114)).